The chain runs to 276 residues: 3-keto-5-aminohexanoate cleavage enzyme (276 aa).

Glutamate 14 is a (5S)-5-amino-3-oxohexanoate binding site. Zn(2+) contacts are provided by histidine 46 and histidine 48. The (5S)-5-amino-3-oxohexanoate site is built by serine 82, glycine 85, threonine 106, and asparagine 108. Position 230 (glutamate 230) interacts with Zn(2+).

It belongs to the BKACE family. Kce subfamily. Homotetramer. Zn(2+) serves as cofactor.

It carries out the reaction (5S)-5-amino-3-oxohexanoate + acetyl-CoA = (3S)-3-aminobutanoyl-CoA + acetoacetate. Its pathway is amino-acid degradation; L-lysine degradation via acetate pathway. Involved in the anaerobic fermentation of lysine. Catalyzes the reversible reaction between 3-keto-5-aminohexanoate (KAH) and acetyl-CoA to form 3-aminobutyryl-CoA and acetoacetate. The reaction involves the deprotonation of KAH, the nucleophilic addition onto acetyl-CoA and the intramolecular transfer of the CoA moiety. In Cloacimonas acidaminovorans (strain Evry), this protein is 3-keto-5-aminohexanoate cleavage enzyme.